The following is a 224-amino-acid chain: 7-cyano-7-deazaguanine synthase (224 aa).

Position 9 to 19 (9 to 19 (LSGGLDSATAL)) interacts with ATP. Zn(2+) is bound by residues Cys-188, Cys-198, Cys-201, and Cys-204.

Belongs to the QueC family. The cofactor is Zn(2+).

It carries out the reaction 7-carboxy-7-deazaguanine + NH4(+) + ATP = 7-cyano-7-deazaguanine + ADP + phosphate + H2O + H(+). It participates in purine metabolism; 7-cyano-7-deazaguanine biosynthesis. Its function is as follows. Catalyzes the ATP-dependent conversion of 7-carboxy-7-deazaguanine (CDG) to 7-cyano-7-deazaguanine (preQ(0)). This Thiobacillus denitrificans (strain ATCC 25259 / T1) protein is 7-cyano-7-deazaguanine synthase.